A 339-amino-acid polypeptide reads, in one-letter code: Dihydroorotate dehydrogenase (quinone) (339 aa).

Residues 62–66 (AGMDK) and threonine 86 contribute to the FMN site. Lysine 66 contacts substrate. 111–115 (NRMGF) lines the substrate pocket. The FMN site is built by asparagine 139 and asparagine 172. Substrate is bound at residue asparagine 172. The active-site Nucleophile is the serine 175. A substrate-binding site is contributed by asparagine 177. Positions 217 and 245 each coordinate FMN. Residue 246–247 (NT) coordinates substrate. FMN-binding positions include glycine 268, glycine 297, and 318-319 (YS).

Belongs to the dihydroorotate dehydrogenase family. Type 2 subfamily. In terms of assembly, monomer. Requires FMN as cofactor.

It is found in the cell membrane. The enzyme catalyses (S)-dihydroorotate + a quinone = orotate + a quinol. It functions in the pathway pyrimidine metabolism; UMP biosynthesis via de novo pathway; orotate from (S)-dihydroorotate (quinone route): step 1/1. In terms of biological role, catalyzes the conversion of dihydroorotate to orotate with quinone as electron acceptor. The protein is Dihydroorotate dehydrogenase (quinone) of Shewanella baltica (strain OS155 / ATCC BAA-1091).